The sequence spans 320 residues: Putative malonate transporter (320 aa).

8 helical membrane passes run Met-1–Thr-21, Met-32–Val-52, Phe-65–Leu-85, Gly-113–Phe-133, Ile-167–Phe-187, Leu-196–Leu-216, Ile-256–Ile-276, and Ala-289–Ile-309.

Belongs to the auxin efflux carrier (TC 2.A.69) family.

It is found in the cell membrane. The protein is Putative malonate transporter (mdcF) of Rhizobium meliloti (strain 1021) (Ensifer meliloti).